A 286-amino-acid polypeptide reads, in one-letter code: B3 domain-containing protein REM20 (286 aa).

Residues 9–102 (PRFFKVFLVE…TFEVSVFDRW (94 aa)) constitute a DNA-binding region (TF-B3). A disordered region spans residues 117-161 (SDSDSDSVVEDEKDSTDVVEDDDDEDEDEDEDDDGSFDEDEEISQ). Acidic residues predominate over residues 119 to 159 (SDSDSVVEDEKDSTDVVEDDDDEDEDEDEDDDGSFDEDEEI).

The protein localises to the nucleus. The protein is B3 domain-containing protein REM20 (REM20) of Arabidopsis thaliana (Mouse-ear cress).